Reading from the N-terminus, the 393-residue chain is Rhizopuspepsin (393 aa).

The first 21 residues, M1 to A21, serve as a signal peptide directing secretion. Residues A22–D68 constitute a propeptide, activation peptide. A Peptidase A1 domain is found at Y85–A389. D103 is a catalytic residue. A disulfide bridge connects residues C116 and C119. The active site involves D286. Cysteines 320 and 353 form a disulfide.

The protein belongs to the peptidase A1 family.

The catalysed reaction is Hydrolysis of proteins with broad specificity similar to that of pepsin A, preferring hydrophobic residues at P1 and P1'. Clots milk and activates trypsinogen. Does not cleave 4-Gln-|-His-5, but does cleave 10-His-|-Leu-11 and 12-Val-|-Glu-13 in B chain of insulin.. The chain is Rhizopuspepsin from Rhizopus chinensis (Bread mold).